We begin with the raw amino-acid sequence, 146 residues long: 3-dehydroquinate dehydratase (146 aa).

Tyrosine 22 acts as the Proton acceptor in catalysis. Substrate is bound by residues asparagine 74, histidine 80, and aspartate 87. Histidine 100 (proton donor) is an active-site residue. Substrate is bound by residues 101–102 and arginine 111; that span reads LS.

This sequence belongs to the type-II 3-dehydroquinase family. In terms of assembly, homododecamer.

The enzyme catalyses 3-dehydroquinate = 3-dehydroshikimate + H2O. The protein operates within metabolic intermediate biosynthesis; chorismate biosynthesis; chorismate from D-erythrose 4-phosphate and phosphoenolpyruvate: step 3/7. In terms of biological role, catalyzes a trans-dehydration via an enolate intermediate. The chain is 3-dehydroquinate dehydratase from Clostridium perfringens (strain 13 / Type A).